Reading from the N-terminus, the 115-residue chain is Large ribosomal subunit protein eL30 (115 aa).

It belongs to the eukaryotic ribosomal protein eL30 family. Component of the large ribosomal subunit.

The protein resides in the cytoplasm. Component of the large ribosomal subunit. The ribosome is a large ribonucleoprotein complex responsible for the synthesis of proteins in the cell. The chain is Large ribosomal subunit protein eL30 (RPL30) from Gallus gallus (Chicken).